The chain runs to 63 residues: Cytochrome c oxidase subunit 7C, mitochondrial (63 aa).

Residues 1-16 (MWGQGVRRFTTSVVRR) constitute a mitochondrion transit peptide. Residues 17 to 33 (SHYEEGPGKNLPFSVEN) are Mitochondrial matrix-facing. Lysine 25 carries the N6-acetyllysine; alternate modification. Lysine 25 carries the N6-succinyllysine; alternate modification. Residues 34 to 60 (KWRLLAMMTLYLGSGFAAPFFIVRHQL) form a helical membrane-spanning segment. Residues 61–63 (LKK) are Mitochondrial intermembrane-facing.

It belongs to the cytochrome c oxidase VIIc family. In terms of assembly, component of the cytochrome c oxidase (complex IV, CIV), a multisubunit enzyme composed of 14 subunits. The complex is composed of a catalytic core of 3 subunits MT-CO1, MT-CO2 and MT-CO3, encoded in the mitochondrial DNA, and 11 supernumerary subunits COX4I, COX5A, COX5B, COX6A, COX6B, COX6C, COX7A, COX7B, COX7C, COX8 and NDUFA4, which are encoded in the nuclear genome. The complex exists as a monomer or a dimer and forms supercomplexes (SCs) in the inner mitochondrial membrane with NADH-ubiquinone oxidoreductase (complex I, CI) and ubiquinol-cytochrome c oxidoreductase (cytochrome b-c1 complex, complex III, CIII), resulting in different assemblies (supercomplex SCI(1)III(2)IV(1) and megacomplex MCI(2)III(2)IV(2)). Interacts with RAB5IF.

The protein resides in the mitochondrion inner membrane. The protein operates within energy metabolism; oxidative phosphorylation. Functionally, component of the cytochrome c oxidase, the last enzyme in the mitochondrial electron transport chain which drives oxidative phosphorylation. The respiratory chain contains 3 multisubunit complexes succinate dehydrogenase (complex II, CII), ubiquinol-cytochrome c oxidoreductase (cytochrome b-c1 complex, complex III, CIII) and cytochrome c oxidase (complex IV, CIV), that cooperate to transfer electrons derived from NADH and succinate to molecular oxygen, creating an electrochemical gradient over the inner membrane that drives transmembrane transport and the ATP synthase. Cytochrome c oxidase is the component of the respiratory chain that catalyzes the reduction of oxygen to water. Electrons originating from reduced cytochrome c in the intermembrane space (IMS) are transferred via the dinuclear copper A center (CU(A)) of subunit 2 and heme A of subunit 1 to the active site in subunit 1, a binuclear center (BNC) formed by heme A3 and copper B (CU(B)). The BNC reduces molecular oxygen to 2 water molecules using 4 electrons from cytochrome c in the IMS and 4 protons from the mitochondrial matrix. This Carlito syrichta (Philippine tarsier) protein is Cytochrome c oxidase subunit 7C, mitochondrial (COX7C).